The chain runs to 199 residues: MMQVLSIQNCATTKENPLSGKLIILTGPSGVGKGTLMRSLLQRHPELYYSVSATTRPPRPGEVNGESYYFVSRSKFEELIAQGEFLESAEFAGNYYGTPREAVLNQVQSGKLVVLEIELAGARQIRTSFPEALSIFILPPSFEELENRIRGRGQDSEEAIARRLQRAKEEIQAADEFDIQIVNDDFEAALQAIEVALFG.

A Guanylate kinase-like domain is found at 20–198 (GKLIILTGPS…ALQAIEVALF (179 aa)). 27–34 (GPSGVGKG) contributes to the ATP binding site.

This sequence belongs to the guanylate kinase family.

It localises to the cytoplasm. The enzyme catalyses GMP + ATP = GDP + ADP. In terms of biological role, essential for recycling GMP and indirectly, cGMP. The sequence is that of Guanylate kinase from Nostoc sp. (strain PCC 7120 / SAG 25.82 / UTEX 2576).